The following is a 214-amino-acid chain: Large ribosomal subunit protein uL4c (214 aa).

The tract at residues 43–80 (KQSNEKRQGSANTKTRSEVRGGGRKPWRQKGTGRARAG) is disordered. Positions 64–75 (GGRKPWRQKGTG) are enriched in basic residues.

It belongs to the universal ribosomal protein uL4 family. In terms of assembly, part of the 50S ribosomal subunit.

It is found in the plastid. The protein localises to the chloroplast. In terms of biological role, probably binds the 23S rRNA. This is Large ribosomal subunit protein uL4c (rpl4) from Porphyra purpurea (Red seaweed).